Here is a 200-residue protein sequence, read N- to C-terminus: Recombination protein RecR (200 aa).

The C4-type zinc finger occupies 60–75 (CVYCQALTEDDVCNIC). A Toprim domain is found at 83–177 (TKLCIIESML…KISRIGFGVP (95 aa)).

The protein belongs to the RecR family.

Functionally, may play a role in DNA repair. It seems to be involved in an RecBC-independent recombinational process of DNA repair. It may act with RecF and RecO. In Francisella tularensis subsp. novicida (strain U112), this protein is Recombination protein RecR.